The sequence spans 289 residues: Poly-beta-1,6-N-acetyl-D-glucosamine N-deacetylase (289 aa).

The N-terminal stretch at 1 to 30 (MKPFKLIFISALMILIMTNATPISHLNAQA) is a signal peptide. Residues 113–289 (RSVWINFDDM…KEWDGFDEEK (177 aa)) enclose the NodB homology domain.

It belongs to the polysaccharide deacetylase family.

It is found in the secreted. The protein resides in the cell wall. In terms of biological role, catalyzes the N-deacetylation of poly-beta-1,6-N-acetyl-D-glucosamine (PNAG, also referred to as PIA), a biofilm adhesin polysaccharide. In fact, the IcaB deacetylase converts 15 to 20% of the GlcNAc residues of PNAG to glucosamine. N-deacetylation is crucial for attachment of the polysaccharide to the bacterial cell surface; it leads to the introduction of positive charges in the otherwise neutral PIA polymer, allowing electrostatic interactions. Deacetylation of the polymer is also essential for key virulence mechanisms of S.epidermidis, namely biofilm formation, colonization, and resistance to neutrophil phagocytosis and human antibacterial peptides. The polypeptide is Poly-beta-1,6-N-acetyl-D-glucosamine N-deacetylase (icaB) (Staphylococcus epidermidis (strain ATCC 35984 / DSM 28319 / BCRC 17069 / CCUG 31568 / BM 3577 / RP62A)).